Reading from the N-terminus, the 206-residue chain is FMN-dependent NADH:quinone oxidoreductase (206 aa).

Residues 15-17 (SVS), 94-97 (MYNF), and 138-141 (TRGG) contribute to the FMN site.

Belongs to the azoreductase type 1 family. In terms of assembly, homodimer. Requires FMN as cofactor.

The enzyme catalyses 2 a quinone + NADH + H(+) = 2 a 1,4-benzosemiquinone + NAD(+). It carries out the reaction N,N-dimethyl-1,4-phenylenediamine + anthranilate + 2 NAD(+) = 2-(4-dimethylaminophenyl)diazenylbenzoate + 2 NADH + 2 H(+). Functionally, quinone reductase that provides resistance to thiol-specific stress caused by electrophilic quinones. Its function is as follows. Also exhibits azoreductase activity. Catalyzes the reductive cleavage of the azo bond in aromatic azo compounds to the corresponding amines. The sequence is that of FMN-dependent NADH:quinone oxidoreductase from Sinorhizobium fredii (strain NBRC 101917 / NGR234).